The chain runs to 164 residues: MILLAFLMFIPGVETKESPVKCEYSDEKKVSECLQVFLYFKTRQCLTMKKLQPMLDYATKLQAETGAMQFPLQGGQVFNQLCSIYTDFKVEAQKEYISCKIAATQAISEAQGAKGSSTEAYLTEMCRAMDGYLRCSHPIILAKCGSDAWTLVSTVCLSRAKLFF.

This is an uncharacterized protein from Caenorhabditis elegans.